Consider the following 441-residue polypeptide: Proline--tRNA ligase (441 aa).

The protein belongs to the class-II aminoacyl-tRNA synthetase family. ProS type 2 subfamily. Homodimer.

It is found in the cytoplasm. The catalysed reaction is tRNA(Pro) + L-proline + ATP = L-prolyl-tRNA(Pro) + AMP + diphosphate. In terms of biological role, catalyzes the attachment of proline to tRNA(Pro) in a two-step reaction: proline is first activated by ATP to form Pro-AMP and then transferred to the acceptor end of tRNA(Pro). The chain is Proline--tRNA ligase from Bartonella bacilliformis (strain ATCC 35685 / KC583 / Herrer 020/F12,63).